Reading from the N-terminus, the 241-residue chain is Orotidine 5'-phosphate decarboxylase (241 aa).

Substrate-binding positions include aspartate 15, lysine 37, 64 to 73 (DLKYHDIPNT), threonine 126, arginine 187, glutamine 196, glycine 216, and arginine 217. The active-site Proton donor is the lysine 66.

Belongs to the OMP decarboxylase family. Type 1 subfamily. In terms of assembly, homodimer.

The enzyme catalyses orotidine 5'-phosphate + H(+) = UMP + CO2. The protein operates within pyrimidine metabolism; UMP biosynthesis via de novo pathway; UMP from orotate: step 2/2. In terms of biological role, catalyzes the decarboxylation of orotidine 5'-monophosphate (OMP) to uridine 5'-monophosphate (UMP). The polypeptide is Orotidine 5'-phosphate decarboxylase (Geotalea uraniireducens (strain Rf4) (Geobacter uraniireducens)).